We begin with the raw amino-acid sequence, 135 residues long: Large ribosomal subunit protein bL21 (135 aa).

Over residues 109-128 the composition is skewed to polar residues; sequence TLATAQSAPPSTSEATTDTT. Residues 109–135 form a disordered region; sequence TLATAQSAPPSTSEATTDTTGIPAAEE.

The protein belongs to the bacterial ribosomal protein bL21 family. Part of the 50S ribosomal subunit. Contacts protein L20.

This protein binds to 23S rRNA in the presence of protein L20. This chain is Large ribosomal subunit protein bL21, found in Synechococcus sp. (strain JA-3-3Ab) (Cyanobacteria bacterium Yellowstone A-Prime).